The sequence spans 300 residues: tRNA dimethylallyltransferase (300 aa).

ATP is bound at residue 11 to 18 (GPTAVGKS). 13-18 (TAVGKS) lines the substrate pocket. Positions 35–38 (DSIQ) are interaction with substrate tRNA.

It belongs to the IPP transferase family. As to quaternary structure, monomer. Mg(2+) serves as cofactor.

It carries out the reaction adenosine(37) in tRNA + dimethylallyl diphosphate = N(6)-dimethylallyladenosine(37) in tRNA + diphosphate. In terms of biological role, catalyzes the transfer of a dimethylallyl group onto the adenine at position 37 in tRNAs that read codons beginning with uridine, leading to the formation of N6-(dimethylallyl)adenosine (i(6)A). This Borrelia turicatae (strain 91E135) protein is tRNA dimethylallyltransferase.